A 373-amino-acid polypeptide reads, in one-letter code: Bifunctional enzyme IspD/IspF (373 aa).

The segment at 1-213 (MSDLTLVLLG…CLQKPSATKR (213 aa)) is 2-C-methyl-D-erythritol 4-phosphate cytidylyltransferase. Residues 213–373 (RIGNGLDVHA…TLHYFDWSEI (161 aa)) are 2-C-methyl-D-erythritol 2,4-cyclodiphosphate synthase. Residues D219 and H221 each coordinate a divalent metal cation. Residues 219 to 221 (DVH) and 245 to 246 (HS) contribute to the 4-CDP-2-C-methyl-D-erythritol 2-phosphate site. An a divalent metal cation-binding site is contributed by H253. 4-CDP-2-C-methyl-D-erythritol 2-phosphate is bound by residues 267-269 (DIG), 272-276 (FPDSD), 343-346 (TTTE), F350, and R353.

The protein in the N-terminal section; belongs to the IspD/TarI cytidylyltransferase family. IspD subfamily. In the C-terminal section; belongs to the IspF family. It depends on a divalent metal cation as a cofactor.

It catalyses the reaction 2-C-methyl-D-erythritol 4-phosphate + CTP + H(+) = 4-CDP-2-C-methyl-D-erythritol + diphosphate. The catalysed reaction is 4-CDP-2-C-methyl-D-erythritol 2-phosphate = 2-C-methyl-D-erythritol 2,4-cyclic diphosphate + CMP. Its pathway is isoprenoid biosynthesis; isopentenyl diphosphate biosynthesis via DXP pathway; isopentenyl diphosphate from 1-deoxy-D-xylulose 5-phosphate: step 2/6. It participates in isoprenoid biosynthesis; isopentenyl diphosphate biosynthesis via DXP pathway; isopentenyl diphosphate from 1-deoxy-D-xylulose 5-phosphate: step 4/6. Its function is as follows. Bifunctional enzyme that catalyzes the formation of 4-diphosphocytidyl-2-C-methyl-D-erythritol from CTP and 2-C-methyl-D-erythritol 4-phosphate (MEP) (IspD), and catalyzes the conversion of 4-diphosphocytidyl-2-C-methyl-D-erythritol 2-phosphate (CDP-ME2P) to 2-C-methyl-D-erythritol 2,4-cyclodiphosphate (ME-CPP) with a corresponding release of cytidine 5-monophosphate (CMP) (IspF). This Nitratiruptor sp. (strain SB155-2) protein is Bifunctional enzyme IspD/IspF.